A 235-amino-acid polypeptide reads, in one-letter code: Uridylate kinase (235 aa).

An ATP-binding site is contributed by Lys-8–Gly-11. Gly-49 contacts UMP. Gly-50 and Arg-54 together coordinate ATP. Thr-131–Thr-138 is a binding site for UMP. ATP-binding residues include Asn-159, Tyr-165, and Asp-168.

Belongs to the UMP kinase family. In terms of assembly, homohexamer.

It is found in the cytoplasm. The catalysed reaction is UMP + ATP = UDP + ADP. Its pathway is pyrimidine metabolism; CTP biosynthesis via de novo pathway; UDP from UMP (UMPK route): step 1/1. With respect to regulation, inhibited by UTP. Its function is as follows. Catalyzes the reversible phosphorylation of UMP to UDP. The polypeptide is Uridylate kinase (Mycoplasma pneumoniae (strain ATCC 29342 / M129 / Subtype 1) (Mycoplasmoides pneumoniae)).